The primary structure comprises 162 residues: Protein-export protein SecB (162 aa).

The protein belongs to the SecB family. Homotetramer, a dimer of dimers. One homotetramer interacts with 1 SecA dimer.

The protein localises to the cytoplasm. In terms of biological role, one of the proteins required for the normal export of preproteins out of the cell cytoplasm. It is a molecular chaperone that binds to a subset of precursor proteins, maintaining them in a translocation-competent state. It also specifically binds to its receptor SecA. The sequence is that of Protein-export protein SecB from Bradyrhizobium sp. (strain BTAi1 / ATCC BAA-1182).